The sequence spans 153 residues: Transcriptional repressor NrdR (153 aa).

The segment at 3-34 (CPSCSHNGTRVLDSRPVDEGRSIRRRRECESC) is a zinc-finger region. Positions 49 to 139 (LIVVKKEGTR…VYRQFKDLNV (91 aa)) constitute an ATP-cone domain.

The protein belongs to the NrdR family. Zn(2+) serves as cofactor.

Its function is as follows. Negatively regulates transcription of bacterial ribonucleotide reductase nrd genes and operons by binding to NrdR-boxes. The chain is Transcriptional repressor NrdR from Bacillus anthracis (strain A0248).